A 202-amino-acid chain; its full sequence is Na(+)-translocating NADH-quinone reductase subunit E (202 aa).

6 consecutive transmembrane segments (helical) span residues V5–M25, V35–L55, F81–F101, G114–V134, L144–I164, and L180–M200.

It belongs to the NqrDE/RnfAE family. Composed of six subunits; NqrA, NqrB, NqrC, NqrD, NqrE and NqrF.

The protein resides in the cell inner membrane. It carries out the reaction a ubiquinone + n Na(+)(in) + NADH + H(+) = a ubiquinol + n Na(+)(out) + NAD(+). Its function is as follows. NQR complex catalyzes the reduction of ubiquinone-1 to ubiquinol by two successive reactions, coupled with the transport of Na(+) ions from the cytoplasm to the periplasm. NqrA to NqrE are probably involved in the second step, the conversion of ubisemiquinone to ubiquinol. The polypeptide is Na(+)-translocating NADH-quinone reductase subunit E (Psychrobacter sp. (strain PRwf-1)).